Reading from the N-terminus, the 285-residue chain is 2,3,4,5-tetrahydropyridine-2,6-dicarboxylate N-succinyltransferase (285 aa).

Substrate contacts are provided by Arg111 and Asp148.

Belongs to the transferase hexapeptide repeat family. In terms of assembly, homotrimer.

Its subcellular location is the cytoplasm. The enzyme catalyses (S)-2,3,4,5-tetrahydrodipicolinate + succinyl-CoA + H2O = (S)-2-succinylamino-6-oxoheptanedioate + CoA. It functions in the pathway amino-acid biosynthesis; L-lysine biosynthesis via DAP pathway; LL-2,6-diaminopimelate from (S)-tetrahydrodipicolinate (succinylase route): step 1/3. In Allorhizobium ampelinum (strain ATCC BAA-846 / DSM 112012 / S4) (Agrobacterium vitis (strain S4)), this protein is 2,3,4,5-tetrahydropyridine-2,6-dicarboxylate N-succinyltransferase.